We begin with the raw amino-acid sequence, 37 residues long: Large ribosomal subunit protein bL36 (37 aa).

The protein belongs to the bacterial ribosomal protein bL36 family.

The protein is Large ribosomal subunit protein bL36 of Helicobacter pylori (strain ATCC 700392 / 26695) (Campylobacter pylori).